The sequence spans 340 residues: Glycerol-3-phosphate dehydrogenase [NAD(P)+] (340 aa).

Residues S12, W13, and K110 each coordinate NADPH. Residues K110, G141, and S143 each contribute to the sn-glycerol 3-phosphate site. A145 lines the NADPH pocket. Residues K196, D249, S259, R260, and N261 each contribute to the sn-glycerol 3-phosphate site. K196 functions as the Proton acceptor in the catalytic mechanism. R260 provides a ligand contact to NADPH. NADPH-binding residues include V284 and E286.

Belongs to the NAD-dependent glycerol-3-phosphate dehydrogenase family.

It is found in the cytoplasm. It carries out the reaction sn-glycerol 3-phosphate + NAD(+) = dihydroxyacetone phosphate + NADH + H(+). The enzyme catalyses sn-glycerol 3-phosphate + NADP(+) = dihydroxyacetone phosphate + NADPH + H(+). It functions in the pathway membrane lipid metabolism; glycerophospholipid metabolism. Catalyzes the reduction of the glycolytic intermediate dihydroxyacetone phosphate (DHAP) to sn-glycerol 3-phosphate (G3P), the key precursor for phospholipid synthesis. The polypeptide is Glycerol-3-phosphate dehydrogenase [NAD(P)+] (Latilactobacillus sakei subsp. sakei (strain 23K) (Lactobacillus sakei subsp. sakei)).